The following is a 183-amino-acid chain: Nascent polypeptide-associated complex subunit beta (183 aa).

One can recognise an NAC-A/B domain in the interval 62–127 (GADDKKLQTT…GEEKELTELV (66 aa)). Positions 150 to 183 (QNMQKQAGTEGKKDEDEDDIPDLVEGENFESNVE) are disordered. Over residues 164–183 (EDEDDIPDLVEGENFESNVE) the composition is skewed to acidic residues.

It belongs to the NAC-beta family. As to quaternary structure, part of the nascent polypeptide-associated complex (NAC), consisting of egd2 and egd1. NAC associates with ribosomes via egd1.

The protein localises to the cytoplasm. It is found in the nucleus. In terms of biological role, component of the nascent polypeptide-associated complex (NAC), a dynamic component of the ribosomal exit tunnel, protecting the emerging polypeptides from interaction with other cytoplasmic proteins to ensure appropriate nascent protein targeting. The NAC complex also promotes mitochondrial protein import by enhancing productive ribosome interactions with the outer mitochondrial membrane and blocks the inappropriate interaction of ribosomes translating non-secretory nascent polypeptides with translocation sites in the membrane of the endoplasmic reticulum. EGD1 may act as a transcription factor that exert a negative effect on the expression of several genes that are transcribed by RNA polymerase II. The polypeptide is Nascent polypeptide-associated complex subunit beta (egd1) (Neosartorya fischeri (strain ATCC 1020 / DSM 3700 / CBS 544.65 / FGSC A1164 / JCM 1740 / NRRL 181 / WB 181) (Aspergillus fischerianus)).